An 889-amino-acid chain; its full sequence is Disease resistance protein RPS5 (889 aa).

Residue Gly2 is the site of N-myristoyl glycine attachment. The S-palmitoyl cysteine moiety is linked to residue Cys4. A coiled-coil region spans residues 29–58; it reads IHNLSKNLASLQKAMRMLKARQYDVIRRLE. One can recognise an NB-ARC domain in the interval 140-444; the sequence is SEATPFADVD…SEGFINEKEG (305 aa). 183 to 190 contacts ATP; the sequence is GMGGVGKT. LRR repeat units lie at residues 518–539, 540–561, 564–586, 588–610, 611–633, and 634–656; these read TVRK…HECA, ALTT…FFRC, HLVV…ISEL, SLRY…WTLK, KLIH…SNLW, and NLRT…KELQ.

It belongs to the disease resistance NB-LRR family. In terms of assembly, in uninfected plants, interacts with PBS1 through the coiled coil domain. Homodimer.

It is found in the cell membrane. Functionally, disease resistance (R) protein that specifically recognizes the avrPphB type III effector avirulence protein from Pseudomonas syringae. Also confers resistance against Hyaloperonospora parasitica (downy mildew). Resistance proteins guard the plant against pathogens that contain an appropriate avirulence protein via an indirect interaction with this avirulence protein. That triggers a defense system including the hypersensitive response, which restricts the pathogen growth. Requires PBS1 to trigger the defense reaction against avrPphB. In case of infection by Pseudomonas syringae, AvrPphB triggers RPS5-mediated defense mechanism via the cleavage of PBS1, suggesting that the cleavage of PBS1 could trigger an exchange of ADP for ATP, thereby activating RPS5. May function as a fine-tuned sensor of alterations in the structure of the effector target PBS1. This chain is Disease resistance protein RPS5 (RPS5), found in Arabidopsis thaliana (Mouse-ear cress).